A 140-amino-acid polypeptide reads, in one-letter code: Putative nickel-responsive regulator 3 (140 aa).

Positions 81, 92, 94, and 100 each coordinate Ni(2+).

The protein belongs to the transcriptional regulatory CopG/NikR family. It depends on Ni(2+) as a cofactor.

Its function is as follows. Transcriptional regulator. The protein is Putative nickel-responsive regulator 3 of Methanosarcina mazei (strain ATCC BAA-159 / DSM 3647 / Goe1 / Go1 / JCM 11833 / OCM 88) (Methanosarcina frisia).